Reading from the N-terminus, the 312-residue chain is L-lactate dehydrogenase (312 aa).

NAD(+) is bound by residues Val-11, Asp-32, Arg-37, and 76–77 (GA). Substrate is bound by residues Gln-79, Arg-85, and 117-120 (NPVD). NAD(+) is bound by residues 115–117 (VSN) and Thr-140. 145–148 (DTAR) is a binding site for substrate. 2 residues coordinate beta-D-fructose 1,6-bisphosphate: Arg-150 and His-165. The active-site Proton acceptor is His-172. The residue at position 217 (Tyr-217) is a Phosphotyrosine. Thr-226 provides a ligand contact to substrate.

The protein belongs to the LDH/MDH superfamily. LDH family. In terms of assembly, homotetramer.

Its subcellular location is the cytoplasm. It carries out the reaction (S)-lactate + NAD(+) = pyruvate + NADH + H(+). It functions in the pathway fermentation; pyruvate fermentation to lactate; (S)-lactate from pyruvate: step 1/1. Allosterically activated by fructose 1,6-bisphosphate (FBP). Functionally, catalyzes the conversion of lactate to pyruvate. This chain is L-lactate dehydrogenase, found in Pseudothermotoga lettingae (strain ATCC BAA-301 / DSM 14385 / NBRC 107922 / TMO) (Thermotoga lettingae).